The sequence spans 226 residues: Probable transcriptional regulatory protein y4xI (226 aa).

The Response regulatory domain maps to 1–114; it reads MRTLLVDTDL…ELIARMRALL (114 aa). The ompR/PhoB-type DNA-binding region spans 122–220; that stretch reads CPIIEFGNLH…VRGIGYTLEL (99 aa).

Its subcellular location is the cytoplasm. The chain is Probable transcriptional regulatory protein y4xI from Sinorhizobium fredii (strain NBRC 101917 / NGR234).